A 423-amino-acid polypeptide reads, in one-letter code: GPI mannosyltransferase 2 (423 aa).

Helical transmembrane passes span 11–31 (ILSLTSIFAAWKSFLLAIALG), 106–126 (WEALVAIAISHVSHLVAVLAL), 139–159 (LAYLASVVHVLSPAGLFISAP), 160–180 (YAESPFACMSFVGNLLYAISL), 197–219 (GLSYGISCTLRSNGLFGGVLFAV), 240–260 (LVAPLIGGILVAVGFVAPQVL), 299–319 (YWTPNQIPLFLLAAPMLTILL), 351–371 (LAAIQTLLAVLAITNYHVQII), and 400–420 (GVIVFITMYAAIQGGLFASFL).

This sequence belongs to the PIGV family.

It localises to the endoplasmic reticulum membrane. It participates in glycolipid biosynthesis; glycosylphosphatidylinositol-anchor biosynthesis. Mannosyltransferase involved in glycosylphosphatidylinositol-anchor biosynthesis. Transfers the second mannose to the glycosylphosphatidylinositol during GPI precursor assembly. The sequence is that of GPI mannosyltransferase 2 (GPI18) from Gibberella zeae (strain ATCC MYA-4620 / CBS 123657 / FGSC 9075 / NRRL 31084 / PH-1) (Wheat head blight fungus).